We begin with the raw amino-acid sequence, 93 residues long: Large ribosomal subunit protein uL23cz/uL23cy (93 aa).

Belongs to the universal ribosomal protein uL23 family. Part of the 50S ribosomal subunit.

It is found in the plastid. It localises to the chloroplast. Its function is as follows. Binds to 23S rRNA. This is Large ribosomal subunit protein uL23cz/uL23cy (rpl23-A) from Oenothera elata subsp. hookeri (Hooker's evening primrose).